We begin with the raw amino-acid sequence, 25 residues long: GLFKVLGSVAKHLLPHVAPVIAEKL.

Leucine 25 carries the post-translational modification Leucine amide.

The protein belongs to the frog skin active peptide (FSAP) family. Caerin subfamily. Post-translationally, caerin-1.7.1 does not have any antibacterial activity. Expressed by the skin dorsal glands.

Its subcellular location is the secreted. Its function is as follows. Antibacterial peptide, that adopts an alpha helical conformation which can disrupt bacterial membranes. Each caerin displays a different antimicrobial specificity. This is Caerin-1.7 from Ranoidea xanthomera (Northern orange-eyed tree frog).